Here is a 189-residue protein sequence, read N- to C-terminus: UPF0149 protein VSAL_I2539 (189 aa).

It belongs to the UPF0149 family.

The polypeptide is UPF0149 protein VSAL_I2539 (Aliivibrio salmonicida (strain LFI1238) (Vibrio salmonicida (strain LFI1238))).